We begin with the raw amino-acid sequence, 501 residues long: Aspartate--tRNA ligase, cytoplasmic (501 aa).

Threonine 52 is modified (phosphothreonine). Lysine 74 is modified (N6-acetyllysine). Glutamate 229 lines the L-aspartate pocket. Serine 249 bears the Phosphoserine mark. The aspartate stretch occupies residues 251–254; the sequence is QLYK. Residue arginine 273 coordinates L-aspartate. ATP-binding positions include 273 to 275 and 281 to 283; these read RAE and RHL. The residue at position 374 (lysine 374) is an N6-acetyllysine. Glutamate 424 is a binding site for ATP. 2 residues coordinate L-aspartate: serine 427 and arginine 431. 472 to 475 lines the ATP pocket; it reads GLER.

It belongs to the class-II aminoacyl-tRNA synthetase family. Type 2 subfamily. As to quaternary structure, homodimer. Part of a multisubunit complex that groups tRNA ligases for Arg (RARS1), Asp (DARS1), Gln (QARS1), Ile (IARS1), Leu (LARS1), Lys (KARS1), Met (MARS1) the bifunctional ligase for Glu and Pro (EPRS1) and the auxiliary subunits AIMP1/p43, AIMP2/p38 and EEF1E1/p18.

It localises to the cytoplasm. It carries out the reaction tRNA(Asp) + L-aspartate + ATP = L-aspartyl-tRNA(Asp) + AMP + diphosphate. Its function is as follows. Catalyzes the specific attachment of an amino acid to its cognate tRNA in a 2 step reaction: the amino acid (AA) is first activated by ATP to form AA-AMP and then transferred to the acceptor end of the tRNA. The protein is Aspartate--tRNA ligase, cytoplasmic (Dars1) of Rattus norvegicus (Rat).